The primary structure comprises 215 residues: Probable transaldolase (215 aa).

The active-site Schiff-base intermediate with substrate is the Lys-83.

The protein belongs to the transaldolase family. Type 3B subfamily.

The protein localises to the cytoplasm. The catalysed reaction is D-sedoheptulose 7-phosphate + D-glyceraldehyde 3-phosphate = D-erythrose 4-phosphate + beta-D-fructose 6-phosphate. The protein operates within carbohydrate degradation; pentose phosphate pathway; D-glyceraldehyde 3-phosphate and beta-D-fructose 6-phosphate from D-ribose 5-phosphate and D-xylulose 5-phosphate (non-oxidative stage): step 2/3. Its function is as follows. Transaldolase is important for the balance of metabolites in the pentose-phosphate pathway. This chain is Probable transaldolase, found in Moorella thermoacetica (strain ATCC 39073 / JCM 9320).